The following is a 256-amino-acid chain: Type III pantothenate kinase (256 aa).

ATP is bound at residue Asp6–Val13. Substrate is bound by residues Tyr100 and Gly107–Arg110. Catalysis depends on Asp109, which acts as the Proton acceptor. Asp129 contacts K(+). ATP is bound at residue Thr132. Thr184 contacts substrate.

It belongs to the type III pantothenate kinase family. Homodimer. Requires NH4(+) as cofactor. It depends on K(+) as a cofactor.

Its subcellular location is the cytoplasm. The enzyme catalyses (R)-pantothenate + ATP = (R)-4'-phosphopantothenate + ADP + H(+). It functions in the pathway cofactor biosynthesis; coenzyme A biosynthesis; CoA from (R)-pantothenate: step 1/5. Functionally, catalyzes the phosphorylation of pantothenate (Pan), the first step in CoA biosynthesis. This is Type III pantothenate kinase from Geotalea uraniireducens (strain Rf4) (Geobacter uraniireducens).